The chain runs to 215 residues: uncharacterized protein (215 aa).

Residues 1-17 (MKKVLASATILSLMLVG) form the signal peptide. A disordered region spans residues 17 to 110 (GCSNGGNDES…NKQQQSVQDN (94 aa)). C18 carries the N-palmitoyl cysteine lipid modification. C18 carries the S-diacylglycerol cysteine lipid modification. Residues 25-69 (ESSHKDDSSKTEQKDKSSSQHDSKKDSKRNDTNNKQDNQENKSNK) show a composition bias toward basic and acidic residues. Over residues 70 to 95 (EQTSNQNSNAGEQRTSERPTTNSNGI) the composition is skewed to polar residues. The segment covering 96 to 110 (SSDNQNKQQQSVQDN) has biased composition (low complexity).

The protein resides in the cell membrane. This is an uncharacterized protein from Staphylococcus epidermidis (strain ATCC 12228 / FDA PCI 1200).